The chain runs to 383 residues: Insulinoma-associated protein 1a (383 aa).

The interval methionine 1–valine 20 is SNAG domain. Disordered stretches follow at residues proline 99–lysine 141 and arginine 229–glycine 269. The segment covering glycine 105–arginine 120 has biased composition (polar residues). Residues lysine 130–arginine 140 show a composition bias toward basic residues. The segment at tyrosine 209 to histidine 231 adopts a C2H2-type 1 zinc-finger fold. Basic and acidic residues predominate over residues alanine 244–threonine 256. A C2H2-type 2; degenerate zinc finger spans residues tyrosine 271 to aspartate 295. 2 C2H2-type zinc fingers span residues histidine 314–histidine 337 and tyrosine 342–histidine 365.

This sequence belongs to the INSM1 family.

It localises to the nucleus. Functionally, may act as a transcriptional regulator. May play a role in neurogenesis and neuroendocrine cell differentiation during embryonic development. This chain is Insulinoma-associated protein 1a (insm1a), found in Danio rerio (Zebrafish).